We begin with the raw amino-acid sequence, 2472 residues long: Telomere-associated protein RIF1 (2472 aa).

Positions 1–25 (MTARGQSPLAPLLETLEDPSASHGG) are disordered. A Phosphoserine modification is found at Ser-402. Thr-409 carries the phosphothreonine modification. 3 positions are modified to phosphoserine: Ser-782, Ser-979, and Ser-1008. Thr-1047 is modified (phosphothreonine). The disordered stretch occupies residues 1145–1192 (LEKSSLSNNECGSLDKTSPEMSNSNNDERKKALISSRKTSTECASSTE). Residues 1148–1169 (SSLSNNECGSLDKTSPEMSNSN) are compositionally biased toward polar residues. Ser-1162 is subject to Phosphoserine. Thr-1220 is subject to Phosphothreonine. Phosphoserine is present on residues Ser-1236 and Ser-1238. 2 stretches are compositionally biased toward basic and acidic residues: residues 1265–1279 (AKQR…DSEK) and 1306–1315 (MRSEPEKNTE). 3 disordered regions span residues 1265 to 1318 (AKQR…EESV), 1398 to 1464 (MVNE…DVLP), and 1479 to 1587 (IEKG…DQEE). A compositionally biased stretch (polar residues) spans 1400-1412 (NEDSQVQITPNQK). 3 positions are modified to phosphoserine: Ser-1422, Ser-1454, and Ser-1513. 2 stretches are compositionally biased toward basic and acidic residues: residues 1431–1464 (SQDK…DVLP) and 1500–1530 (EQNK…EKLV). Phosphothreonine is present on Thr-1518. Ser-1542, Ser-1552, Ser-1554, Ser-1556, and Ser-1564 each carry phosphoserine. The segment covering 1565–1574 (RKKRSGKWKN) has biased composition (basic residues). Residues Ser-1576, Ser-1579, Ser-1613, Ser-1616, Ser-1688, Ser-1693, Ser-1706, and Ser-1709 each carry the phosphoserine modification. A disordered region spans residues 1762-1782 (TKKADVQAPVSPSETSQANPY). The segment covering 1771 to 1782 (VSPSETSQANPY) has biased composition (polar residues). Thr-1806 bears the Phosphothreonine mark. Position 1810 is a phosphoserine (Ser-1810). Positions 1846–1859 (AMSLESQESPNENF) are enriched in polar residues. Residues 1846-1889 (AMSLESQESPNENFKTVGPCLGDSKNVSQESLETKEEKPEETPK) form a disordered region. A phosphoserine mark is found at Ser-1873 and Ser-1876. Positions 1877–1889 (LETKEEKPEETPK) are enriched in basic and acidic residues. The interval 1924 to 2472 (EASFHGQERT…WRSPSHENSI (549 aa)) is interaction with condensed chromosomes in telophase. Residues Ser-1926 and Ser-1971 each carry the phosphoserine modification. The segment at 1992–2021 (EQTAAGELDGGNDVSDLHSSEETNTKMKNN) is disordered. Basic and acidic residues predominate over residues 2006–2021 (SDLHSSEETNTKMKNN). Residues Ser-2144 and Ser-2161 each carry the phosphoserine modification. Thr-2167 is subject to Phosphothreonine. An interaction with ERCC6 region spans residues 2170–2446 (VWSPLASPST…SGSQLFEMHE (277 aa)). Phosphoserine is present on residues Ser-2172, Ser-2176, Ser-2195, Ser-2196, and Ser-2205. Residues 2227–2255 (RSHSSNSSPIGKSVKTSPTTQSKHNTTSA) show a composition bias toward polar residues. The disordered stretch occupies residues 2227–2269 (RSHSSNSSPIGKSVKTSPTTQSKHNTTSAKGFLSPGSRSPKFK). Ser-2260, Ser-2339, Ser-2391, Ser-2393, Ser-2465, and Ser-2471 each carry phosphoserine.

Belongs to the RIF1 family. Interacts with TP53BP1 (when phosphorylated by ATM). May interact with TRF2. Interacts with SHLD2. Interacts with ERCC6 (via WHD region). Interacts with ASTE1. As to expression, highly expressed in testis.

It is found in the nucleus. The protein localises to the chromosome. Its subcellular location is the telomere. The protein resides in the cytoplasm. It localises to the cytoskeleton. It is found in the spindle. Functionally, key regulator of TP53BP1 that plays a key role in the repair of double-strand DNA breaks (DSBs) in response to DNA damage: acts by promoting non-homologous end joining (NHEJ)-mediated repair of DSBs. In response to DNA damage, interacts with ATM-phosphorylated TP53BP1. Interaction with TP53BP1 leads to dissociate the interaction between NUDT16L1/TIRR and TP53BP1, thereby unmasking the tandem Tudor-like domain of TP53BP1 and allowing recruitment to DNA DSBs. Once recruited to DSBs, RIF1 and TP53BP1 act by promoting NHEJ-mediated repair of DSBs. In the same time, RIF1 and TP53BP1 specifically counteract the function of BRCA1 by blocking DSBs resection via homologous recombination (HR) during G1 phase. Also required for immunoglobulin class-switch recombination (CSR) during antibody genesis, a process that involves the generation of DNA DSBs. Promotes NHEJ of dysfunctional telomeres. The chain is Telomere-associated protein RIF1 from Homo sapiens (Human).